A 1013-amino-acid polypeptide reads, in one-letter code: Lysosomal alpha-mannosidase (1013 aa).

Residues 1-49 form the signal peptide; that stretch reads MGTGPLTSGVRAGGGNTGWLWMSSCNLGSPVLPISFLFWLLLAAPGARA. Intrachain disulfides connect Cys55-Cys358 and Cys268-Cys273. The Zn(2+) site is built by His72, Asp74, and Asp196. The Nucleophile role is filled by Asp196. Residues Asn310, Asn345, and Asn367 are each glycosylated (N-linked (GlcNAc...) asparagine). Cys412 and Cys472 form a disulfide bridge. Zn(2+) is bound at residue His446. 8 N-linked (GlcNAc...) asparagine glycosylation sites follow: Asn489, Asn497, Asn544, Asn633, Asn646, Asn693, Asn767, and Asn931. A disulfide bond links Cys493 and Cys501.

The protein belongs to the glycosyl hydrolase 38 family. The cofactor is Zn(2+).

The protein resides in the lysosome. The catalysed reaction is Hydrolysis of terminal, non-reducing alpha-D-mannose residues in alpha-D-mannosides.. Its function is as follows. Necessary for the catabolism of N-linked carbohydrates released during glycoprotein turnover. This is Lysosomal alpha-mannosidase (Man2b1) from Mus musculus (Mouse).